A 224-amino-acid polypeptide reads, in one-letter code: MTLFHFGNCFALAYFPYFITYKCSGLSEYNAFWKCVQAGVTYLFVQLCKMLFLATFFPTWEGGIYDFIGEFMKASVDVADLIGLNLVMSRNAGKGEYKIMVAALGWATAELIMSRCIPLWVGARGIEFDWKYIQMSIDSNISLVHYIVASAQVWMITRYDLYHTFRPAVLLLMFLSVYKAFVMETFVHLCSLGSWAALLARAVVTGLLALSTLALYVAVVNVHS.

Residues 1 to 21 (MTLFHFGNCFALAYFPYFITY) form a helical membrane-spanning segment. At 22–34 (KCSGLSEYNAFWK) the chain is on the cytoplasmic side. The helical transmembrane segment at 35-58 (CVQAGVTYLFVQLCKMLFLATFFP) threads the bilayer. The Lumenal segment spans residues 59–66 (TWEGGIYD). Residues 67–88 (FIGEFMKASVDVADLIGLNLVM) form a helical membrane-spanning segment. Residues 89 to 98 (SRNAGKGEYK) are Cytoplasmic-facing. The helical transmembrane segment at 99–124 (IMVAALGWATAELIMSRCIPLWVGAR) threads the bilayer. Topologically, residues 125–129 (GIEFD) are lumenal. The helical transmembrane segment at 130–155 (WKYIQMSIDSNISLVHYIVASAQVWM) threads the bilayer. The Cytoplasmic portion of the chain corresponds to 156–164 (ITRYDLYHT). Residues 165–187 (FRPAVLLLMFLSVYKAFVMETFV) form a helical membrane-spanning segment. Residues 188 to 194 (HLCSLGS) are Lumenal-facing. A helical transmembrane segment spans residues 195-216 (WAALLARAVVTGLLALSTLALY). Residues 217–224 (VAVVNVHS) lie on the Cytoplasmic side of the membrane.

This sequence belongs to the TMEM147 family. In terms of assembly, component of the back of Sec61 (BOS) complex, composed of NCLN/Nicalin, NOMO (NOMO1, NOMO2 or NOMO3) and TMEM147. The BOS complex is part of the multi-pass translocon (MPT) complex, composed of three subcomplexes, the GEL complex (composed of RAB5IF/OPTI and TMCO1), the BOS complex (composed of NCLN/Nicalin, NOMO and TMEM147) and the PAT complex (composed of WDR83OS/Asterix and CCDC47). The MPT complex associates with the SEC61 complex. Interacts with CHRM3, CHRM1 and AVPR2. Interacts with LBR; promoting LBR localization to the nucleus inner membrane. Interacts with DHCR7.

Its subcellular location is the endoplasmic reticulum membrane. It is found in the nucleus membrane. It localises to the cell membrane. Component of the multi-pass translocon (MPT) complex that mediates insertion of multi-pass membrane proteins into the lipid bilayer of membranes. The MPT complex takes over after the SEC61 complex: following membrane insertion of the first few transmembrane segments of proteins by the SEC61 complex, the MPT complex occludes the lateral gate of the SEC61 complex to promote insertion of subsequent transmembrane regions. Also acts as a negative regulator of CHRM3 function, most likely by interfering with its trafficking to the cell membrane. Negatively regulates CHRM3-mediated calcium mobilization and activation of RPS6KA1/p90RSK activity. Regulates LBR localization to the nucleus inner membrane. In Homo sapiens (Human), this protein is BOS complex subunit TMEM147.